The following is a 309-amino-acid chain: Coenzyme PQQ synthesis protein B (309 aa).

This sequence belongs to the PqqB family.

It functions in the pathway cofactor biosynthesis; pyrroloquinoline quinone biosynthesis. Its function is as follows. May be involved in the transport of PQQ or its precursor to the periplasm. The protein is Coenzyme PQQ synthesis protein B of Bradyrhizobium diazoefficiens (strain JCM 10833 / BCRC 13528 / IAM 13628 / NBRC 14792 / USDA 110).